A 388-amino-acid polypeptide reads, in one-letter code: Staphopain A (388 aa).

The N-terminal stretch at 1–25 (MKRNFPKLIALSLIFSLSVTPIANA) is a signal peptide. The propeptide occupies 26 to 214 (ESNSNIKAKD…TSQFKSNNYT (189 aa)). Catalysis depends on residues Cys238, His334, and Asn355.

It belongs to the peptidase C47 family. In the cytoplasm, prematurely activated/folded ScpA forms a stable non-covalent complex with ScpB. Post-translationally, cleavage leads to the activation of ScpA probably by an auto-catalytic manner.

It localises to the secreted. The enzyme catalyses Broad endopeptidase action on proteins including elastin, but rather limited hydrolysis of small-molecule substrates. Assays are conveniently made with hemoglobin, casein or Z-Phe-Arg-NHMec as substrate.. Its activity is regulated as follows. Prematurely activated/folded staphopain A is inhibited by staphostatin A (ScpB), which is probably required to protect staphylococcal cytoplasmic proteins from degradation by ScpA. Functionally, cysteine protease that plays an important role in the inhibition of host innate immune response. Cleaves host elastins found in connective tissues, pulmonary surfactant protein A in the lungs, and the chemokine receptor CXCR2 on leukocytes. Proteolytic cleavage of surfactant protein A impairs bacterial phagocytosis by neutrophils while CXCR2 degradation blocks neutrophil activation and chemotaxis. Additionally, promotes vascular leakage by activating the plasma kallikerin/kinin system, resulting in hypotension. The protein is Staphopain A (sspP) of Staphylococcus aureus (strain Mu50 / ATCC 700699).